We begin with the raw amino-acid sequence, 463 residues long: Succinate--CoA ligase [ADP-forming] subunit beta, mitochondrial (463 aa).

A mitochondrion-targeting transit peptide spans 1-52; the sequence is MAASMFYGRLVAVATLRNHRPRTAQRAAAQVLGSSGLFNNHGLQVQQQQQRN. One can recognise an ATP-grasp domain in the interval 61-288; the sequence is MELLQEAGVS…SNSAYRQKKI (228 aa). An N6-acetyllysine modification is found at Lys-78. At Tyr-84 the chain carries Phosphotyrosine. Lys-88 bears the N6-acetyllysine; alternate mark. N6-succinyllysine; alternate is present on Lys-88. ATP contacts are provided by residues Lys-98 and 105–107; that span reads GRG. Lys-129, Lys-139, Lys-143, and Lys-216 each carry N6-acetyllysine. Positions 258 and 272 each coordinate Mg(2+). Ser-279 is subject to Phosphoserine. Asn-323 contacts substrate. Thr-341 is modified (phosphothreonine). Lys-368 is modified (N6-acetyllysine). Substrate is bound at residue 380-382; the sequence is GIM.

Belongs to the succinate/malate CoA ligase beta subunit family. ATP-specific subunit beta subfamily. In terms of assembly, heterodimer of an alpha and a beta subunit. The beta subunit determines specificity for ATP. Interacts with ALAS2. Mg(2+) serves as cofactor. In terms of tissue distribution, widely expressed. Not expressed in liver and lung.

The protein resides in the mitochondrion. The catalysed reaction is succinate + ATP + CoA = succinyl-CoA + ADP + phosphate. Its pathway is carbohydrate metabolism; tricarboxylic acid cycle; succinate from succinyl-CoA (ligase route): step 1/1. Its activity is regulated as follows. Inhibited by itaconate. Functionally, ATP-specific succinyl-CoA synthetase functions in the citric acid cycle (TCA), coupling the hydrolysis of succinyl-CoA to the synthesis of ATP and thus represents the only step of substrate-level phosphorylation in the TCA. The beta subunit provides nucleotide specificity of the enzyme and binds the substrate succinate, while the binding sites for coenzyme A and phosphate are found in the alpha subunit. This chain is Succinate--CoA ligase [ADP-forming] subunit beta, mitochondrial, found in Homo sapiens (Human).